Consider the following 252-residue polypeptide: 2-succinyl-6-hydroxy-2,4-cyclohexadiene-1-carboxylate synthase (252 aa).

It belongs to the AB hydrolase superfamily. MenH family. As to quaternary structure, monomer.

It catalyses the reaction 5-enolpyruvoyl-6-hydroxy-2-succinyl-cyclohex-3-ene-1-carboxylate = (1R,6R)-6-hydroxy-2-succinyl-cyclohexa-2,4-diene-1-carboxylate + pyruvate. It participates in quinol/quinone metabolism; 1,4-dihydroxy-2-naphthoate biosynthesis; 1,4-dihydroxy-2-naphthoate from chorismate: step 3/7. Its pathway is quinol/quinone metabolism; menaquinone biosynthesis. Catalyzes a proton abstraction reaction that results in 2,5-elimination of pyruvate from 2-succinyl-5-enolpyruvyl-6-hydroxy-3-cyclohexene-1-carboxylate (SEPHCHC) and the formation of 2-succinyl-6-hydroxy-2,4-cyclohexadiene-1-carboxylate (SHCHC). The chain is 2-succinyl-6-hydroxy-2,4-cyclohexadiene-1-carboxylate synthase from Escherichia coli O8 (strain IAI1).